Consider the following 357-residue polypeptide: Protein FAM118A (357 aa).

Residue M1 is modified to N-acetylmethionine. A helical transmembrane segment spans residues L30–C50. At S311 the chain carries Phosphoserine.

The protein belongs to the FAM118 family.

It is found in the membrane. This chain is Protein FAM118A (FAM118A), found in Homo sapiens (Human).